Reading from the N-terminus, the 433-residue chain is Glutamate-1-semialdehyde 2,1-aminomutase (433 aa).

N6-(pyridoxal phosphate)lysine is present on lysine 272.

It belongs to the class-III pyridoxal-phosphate-dependent aminotransferase family. HemL subfamily. Homodimer. Requires pyridoxal 5'-phosphate as cofactor.

The protein resides in the cytoplasm. It catalyses the reaction (S)-4-amino-5-oxopentanoate = 5-aminolevulinate. It functions in the pathway porphyrin-containing compound metabolism; protoporphyrin-IX biosynthesis; 5-aminolevulinate from L-glutamyl-tRNA(Glu): step 2/2. The protein operates within porphyrin-containing compound metabolism; chlorophyll biosynthesis. The polypeptide is Glutamate-1-semialdehyde 2,1-aminomutase (Synechococcus sp. (strain WH7803)).